The sequence spans 256 residues: Large ribosomal subunit protein eL8A (256 aa).

The disordered stretch occupies residues 1 to 37 (MAPGKKVAPAPFGAKSTKSNKTRNPLTHSTPKNFGIG). Over residues 16 to 32 (STKSNKTRNPLTHSTPK) the composition is skewed to polar residues.

The protein belongs to the eukaryotic ribosomal protein eL8 family. As to quaternary structure, component of the large ribosomal subunit (LSU). Mature yeast ribosomes consist of a small (40S) and a large (60S) subunit. The 40S small subunit contains 1 molecule of ribosomal RNA (18S rRNA) and 33 different proteins (encoded by 57 genes). The large 60S subunit contains 3 rRNA molecules (25S, 5.8S and 5S rRNA) and 46 different proteins (encoded by 81 genes).

Its subcellular location is the cytoplasm. Its function is as follows. Component of the ribosome, a large ribonucleoprotein complex responsible for the synthesis of proteins in the cell. The small ribosomal subunit (SSU) binds messenger RNAs (mRNAs) and translates the encoded message by selecting cognate aminoacyl-transfer RNA (tRNA) molecules. The large subunit (LSU) contains the ribosomal catalytic site termed the peptidyl transferase center (PTC), which catalyzes the formation of peptide bonds, thereby polymerizing the amino acids delivered by tRNAs into a polypeptide chain. The nascent polypeptides leave the ribosome through a tunnel in the LSU and interact with protein factors that function in enzymatic processing, targeting, and the membrane insertion of nascent chains at the exit of the ribosomal tunnel. The polypeptide is Large ribosomal subunit protein eL8A (Saccharomyces cerevisiae (strain ATCC 204508 / S288c) (Baker's yeast)).